A 423-amino-acid chain; its full sequence is Mannose-6-phosphate isomerase (423 aa).

Position 2 is an N-acetylalanine (alanine 2). Serine 102 and serine 108 each carry phosphoserine. Zn(2+) is bound by residues glutamine 110, histidine 112, glutamate 137, and histidine 276. Arginine 295 is an active-site residue.

It belongs to the mannose-6-phosphate isomerase type 1 family. It depends on Zn(2+) as a cofactor.

It is found in the cytoplasm. It carries out the reaction D-mannose 6-phosphate = D-fructose 6-phosphate. It functions in the pathway nucleotide-sugar biosynthesis; GDP-alpha-D-mannose biosynthesis; alpha-D-mannose 1-phosphate from D-fructose 6-phosphate: step 1/2. Isomerase that catalyzes the interconversion of fructose-6-P and mannose-6-P and has a critical role in the supply of D-mannose derivatives required for many eukaryotic glycosylation reactions. In Rattus norvegicus (Rat), this protein is Mannose-6-phosphate isomerase.